Consider the following 31-residue polypeptide: Photosystem I reaction center subunit XII (31 aa).

The helical transmembrane segment at 7–26 threads the bilayer; that stretch reads QISIILLIALIPAFFSLKLG.

It belongs to the PsaM family.

The protein resides in the plastid. Its subcellular location is the chloroplast thylakoid membrane. The chain is Photosystem I reaction center subunit XII from Euglena myxocylindracea.